Consider the following 416-residue polypeptide: Lipid phosphate phosphatase delta (416 aa).

2 helical membrane-spanning segments follow: residues 72–92 (FFSG…LPLL) and 104–124 (MTLL…VVSA). The interval 119 to 127 (KDVVSAPRP) is phosphatase sequence motif I. Positions 151 to 154 (PSSH) are phosphatase sequence motif II. H154 (proton donor) is an active-site residue. Residues 178-198 (VSIQYYGFALACLLVALIAFG) traverse the membrane as a helical segment. Residues 198–209 (GRVYLGMHSVVD) are phosphatase sequence motif III. Residue H205 is the Nucleophile of the active site. 5 helical membrane-spanning segments follow: residues 207-227 (VVDI…WLTV), 241-261 (VSSF…TPEH), 266-286 (YEYH…VQQT), 302-322 (ELPI…ILLV), and 393-413 (FFQY…LFSY).

The protein belongs to the type 2 lipid phosphate phosphatase family.

The protein localises to the endoplasmic reticulum membrane. Functionally, functions as a sphingoid long-chain base phosphate (LCBP) phosphatase. May play a role in the regulation of LCBP levels and be involved in stomatal responses through LCBP-mediated ABA signaling. The chain is Lipid phosphate phosphatase delta (LPPD) from Arabidopsis thaliana (Mouse-ear cress).